Consider the following 149-residue polypeptide: Ribonuclease pancreatic (149 aa).

An N-terminal signal peptide occupies residues 1–25 (MGLEKSLILLPLLVLVLAWVQPSLG). Positions 32 and 35 each coordinate substrate. The Proton acceptor role is filled by histidine 37. Cystine bridges form between cysteine 51–cysteine 109, cysteine 65–cysteine 120, cysteine 83–cysteine 135, and cysteine 90–cysteine 97. Residue 66 to 70 (KRVNT) participates in substrate binding. Asparagine 87 is a glycosylation site (N-linked (GlcNAc...) asparagine). Residues lysine 91 and arginine 110 each coordinate substrate. The active-site Proton donor is the histidine 144.

It belongs to the pancreatic ribonuclease family. In terms of assembly, monomer. Interacts with and forms tight 1:1 complexes with RNH1. Dimerization of two such complexes may occur. Interaction with RNH1 inhibits this protein. As to expression, pancreas.

It is found in the secreted. It carries out the reaction an [RNA] containing cytidine + H2O = an [RNA]-3'-cytidine-3'-phosphate + a 5'-hydroxy-ribonucleotide-3'-[RNA].. The catalysed reaction is an [RNA] containing uridine + H2O = an [RNA]-3'-uridine-3'-phosphate + a 5'-hydroxy-ribonucleotide-3'-[RNA].. Its function is as follows. Endonuclease that catalyzes the cleavage of RNA on the 3' side of pyrimidine nucleotides. Acts on single-stranded and double-stranded RNA. This chain is Ribonuclease pancreatic (RNASE1), found in Acomys cahirinus (Cairo spiny mouse).